Here is a 330-residue protein sequence, read N- to C-terminus: MTKIMFFGTRDYEKEMALNWGKKNNVEVTTSKELLSSATVDQLKDYDGVTTMQFGKLENDVYPKLESYGIKQIAQRTAGFDMYDLDLAKKHNIVISNVPSYSPETIAEYSVSIALQLVRRFPDIERRVQAHDFTWQAEIMSKPVKNMTVAIIGTGRIGAATAKIYAGFGATITAYDAYPNKDLDFLTYKDSVKEAIKDADIISLHVPANKESYHLFDKAMFDHVKKGAILVNAARGAVINTPDLIAAVNDGTLLGAAIDTYENEAAYFTNDWTNKDIDDKTLLELIEHERILVTPHIAFFSDEAVQNLVEGGLNAALSVINTGTCETRLN.

Residues 156–157 (RI), Asp-176, 206–207 (VP), 233–235 (AAR), and Asp-259 each bind NAD(+). Arg-235 is an active-site residue. Glu-264 is a catalytic residue. His-296 acts as the Proton donor in catalysis.

It belongs to the D-isomer specific 2-hydroxyacid dehydrogenase family.

It carries out the reaction (R)-lactate + NAD(+) = pyruvate + NADH + H(+). The protein is D-lactate dehydrogenase (ldhD) of Staphylococcus aureus.